The sequence spans 171 residues: tRNA-splicing endonuclease subunit Sen15 (171 aa).

The tract at residues 1–35 (MEERGDSEPTPGCSGLGPGGVRGFGDGGGAPSWAP) is disordered. Serine 7 bears the Phosphoserine mark. Gly residues predominate over residues 14 to 30 (SGLGPGGVRGFGDGGGA). Position 168 is a phosphoserine (serine 168).

It belongs to the SEN15 family. In terms of assembly, homodimer. tRNA splicing endonuclease is a heterotetramer composed of TSEN2, TSEN15, TSEN34/LENG5 and TSEN54. tRNA splicing endonuclease complex also contains proteins of the Pre-mRNA 3' end processing machinery, such as CLP1, CPSF1, CPSF4 and CSTF2. In terms of tissue distribution, widely expressed. Highly expressed in testis and uterus.

It localises to the nucleus. The protein resides in the nucleolus. Functionally, non-catalytic subunit of the tRNA-splicing endonuclease complex, a complex responsible for identification and cleavage of the splice sites in pre-tRNA. It cleaves pre-tRNA at the 5' and 3' splice sites to release the intron. The products are an intron and two tRNA half-molecules bearing 2',3' cyclic phosphate and 5'-OH termini. There are no conserved sequences at the splice sites, but the intron is invariably located at the same site in the gene, placing the splice sites an invariant distance from the constant structural features of the tRNA body. The tRNA splicing endonuclease is also involved in mRNA processing via its association with pre-mRNA 3'-end processing factors, establishing a link between pre-tRNA splicing and pre-mRNA 3'-end formation, suggesting that the endonuclease subunits function in multiple RNA-processing events. The chain is tRNA-splicing endonuclease subunit Sen15 (TSEN15) from Homo sapiens (Human).